The following is a 185-amino-acid chain: Large ribosomal subunit protein uL22 (185 aa).

The protein belongs to the universal ribosomal protein uL22 family. Part of the 50S ribosomal subunit.

This protein binds specifically to 23S rRNA. It makes multiple contacts with different domains of the 23S rRNA in the assembled 50S subunit and ribosome. In terms of biological role, the globular domain of the protein is located near the polypeptide exit tunnel on the outside of the subunit, while an extended beta-hairpin is found that lines the wall of the exit tunnel in the center of the 70S ribosome. This Pyrobaculum neutrophilum (strain DSM 2338 / JCM 9278 / NBRC 100436 / V24Sta) (Thermoproteus neutrophilus) protein is Large ribosomal subunit protein uL22.